A 50-amino-acid chain; its full sequence is Insulin (50 aa).

Disulfide bonds link C7-C36, C19-C49, and C35-C40.

The protein belongs to the insulin family. As to quaternary structure, heterodimer of a B chain and an A chain linked by two disulfide bonds.

The protein localises to the secreted. In terms of biological role, insulin decreases blood glucose concentration. It increases cell permeability to monosaccharides, amino acids and fatty acids. It accelerates glycolysis, the pentose phosphate cycle, and glycogen synthesis in liver. The chain is Insulin (ins) from Myoxocephalus scorpius (Shorthorn sculpin).